Consider the following 387-residue polypeptide: Arrestin-C (387 aa).

It belongs to the arrestin family. In terms of tissue distribution, retina and pineal gland.

In terms of biological role, may play a role in an as yet undefined retina-specific signal transduction. Could bind to photoactivated-phosphorylated red/green opsins. This Xenopus laevis (African clawed frog) protein is Arrestin-C (arr3).